The primary structure comprises 304 residues: Glyceraldehyde-3-phosphate dehydrogenase 2 (304 aa).

NAD(+) contacts are provided by residues 1–2 (RI), Asp-22, and Arg-67. Residues 138-140 (SCT), Thr-169, 198-199 (TG), and Arg-221 each bind D-glyceraldehyde 3-phosphate. Cys-139 acts as the Nucleophile in catalysis. Asn-303 serves as a coordination point for NAD(+).

The protein belongs to the glyceraldehyde-3-phosphate dehydrogenase family. As to quaternary structure, homotetramer.

The protein localises to the cytoplasm. The enzyme catalyses D-glyceraldehyde 3-phosphate + phosphate + NAD(+) = (2R)-3-phospho-glyceroyl phosphate + NADH + H(+). Its pathway is carbohydrate degradation; glycolysis; pyruvate from D-glyceraldehyde 3-phosphate: step 1/5. In Drosophila subobscura (Fruit fly), this protein is Glyceraldehyde-3-phosphate dehydrogenase 2 (Gapdh2).